A 324-amino-acid chain; its full sequence is Beta-ketoacyl-[acyl-carrier-protein] synthase III (324 aa).

Residues C114 and H251 contribute to the active site. Residues 252–256 (QANQR) are ACP-binding. Residue N281 is part of the active site.

This sequence belongs to the thiolase-like superfamily. FabH family. As to quaternary structure, homodimer.

The protein localises to the cytoplasm. It carries out the reaction malonyl-[ACP] + acetyl-CoA + H(+) = 3-oxobutanoyl-[ACP] + CO2 + CoA. It participates in lipid metabolism; fatty acid biosynthesis. Catalyzes the condensation reaction of fatty acid synthesis by the addition to an acyl acceptor of two carbons from malonyl-ACP. Catalyzes the first condensation reaction which initiates fatty acid synthesis and may therefore play a role in governing the total rate of fatty acid production. Possesses both acetoacetyl-ACP synthase and acetyl transacylase activities. Its substrate specificity determines the biosynthesis of branched-chain and/or straight-chain of fatty acids. The polypeptide is Beta-ketoacyl-[acyl-carrier-protein] synthase III (Rhodospirillum rubrum (strain ATCC 11170 / ATH 1.1.1 / DSM 467 / LMG 4362 / NCIMB 8255 / S1)).